The primary structure comprises 335 residues: Phospho-N-acetylmuramoyl-pentapeptide-transferase (335 aa).

Helical transmembrane passes span 2 to 22 (PPLFCVLKAFFIGLVVSLILV), 55 to 75 (IPTAGGIIFVLSVVLSILLLL), 77 to 97 (CNLWSTWFLVGATLLWGALGW), 118 to 137 (FFIQNCLAIGTVLPIMIAYG), 153 to 173 (LPHCWLGYLFSFSIAVLAIVG), 193 to 213 (VIACLGMLIVTFAYGAPWAFI), 238 to 258 (IFMGDTGSLFLGGMLGICAVL), 263 to 283 (FMLLFMGGIFVLESLSVILQV), and 313 to 333 (VVRNFWIIEFLCVAIGIFAVF).

The protein belongs to the glycosyltransferase 4 family. MraY subfamily. It depends on Mg(2+) as a cofactor.

The protein localises to the cell inner membrane. The enzyme catalyses UDP-N-acetyl-alpha-D-muramoyl-L-alanyl-gamma-D-glutamyl-meso-2,6-diaminopimeloyl-D-alanyl-D-alanine + di-trans,octa-cis-undecaprenyl phosphate = di-trans,octa-cis-undecaprenyl diphospho-N-acetyl-alpha-D-muramoyl-L-alanyl-D-glutamyl-meso-2,6-diaminopimeloyl-D-alanyl-D-alanine + UMP. It participates in cell wall biogenesis; peptidoglycan biosynthesis. In terms of biological role, catalyzes the initial step of the lipid cycle reactions in the biosynthesis of the cell wall peptidoglycan: transfers peptidoglycan precursor phospho-MurNAc-pentapeptide from UDP-MurNAc-pentapeptide onto the lipid carrier undecaprenyl phosphate, yielding undecaprenyl-pyrophosphoryl-MurNAc-pentapeptide, known as lipid I. This Chlamydia muridarum (strain MoPn / Nigg) protein is Phospho-N-acetylmuramoyl-pentapeptide-transferase.